The primary structure comprises 149 residues: Probable flagellum biosynthesis repressor protein FlbT (149 aa).

The protein belongs to the FlbT family.

Its function is as follows. Has a post-transcriptional repressor function in flagellum biogenesis. Associates with the 5'-UTR of fljK mRNA and promotes its degradation. The protein is Probable flagellum biosynthesis repressor protein FlbT of Agrobacterium fabrum (strain C58 / ATCC 33970) (Agrobacterium tumefaciens (strain C58)).